We begin with the raw amino-acid sequence, 111 residues long: Rubredoxin (111 aa).

A Rubredoxin-like domain is found at 11–62 (LDRFECRSCGYVYEPEKGDSKHDIAPETPFAELPINWRCPVCTAKKAAFSNI). Fe cation contacts are provided by C16, C19, C49, and C52.

It belongs to the rubredoxin family. Requires Fe(3+) as cofactor.

Rubredoxin is a small nonheme, iron protein lacking acid-labile sulfide. Its single Fe, chelated to 4 Cys, functions as an electron acceptor and may also stabilize the conformation of the molecule. Could be involved in hydrogenase-linked redox processes. The sequence is that of Rubredoxin (rub) from Trichormus variabilis (strain ATCC 29413 / PCC 7937) (Anabaena variabilis).